Reading from the N-terminus, the 204-residue chain is Potassium-transporting ATPase KdpC subunit (204 aa).

A helical transmembrane segment spans residues 21–41 (AALVIFVGLSLVTGVLYPVVV).

The protein belongs to the KdpC family. In terms of assembly, the system is composed of three essential subunits: KdpA, KdpB and KdpC.

The protein resides in the cell inner membrane. Part of the high-affinity ATP-driven potassium transport (or Kdp) system, which catalyzes the hydrolysis of ATP coupled with the electrogenic transport of potassium into the cytoplasm. This subunit acts as a catalytic chaperone that increases the ATP-binding affinity of the ATP-hydrolyzing subunit KdpB by the formation of a transient KdpB/KdpC/ATP ternary complex. In Ralstonia nicotianae (strain ATCC BAA-1114 / GMI1000) (Ralstonia solanacearum), this protein is Potassium-transporting ATPase KdpC subunit.